Here is an 823-residue protein sequence, read N- to C-terminus: Aminopeptidase O (823 aa).

A Zn(2+)-binding site is contributed by His-481. The active-site Proton acceptor is the Glu-482. Residues His-485 and Glu-504 each contribute to the Zn(2+) site. Positions 693–703 (RRPRKRKRGKR) match the Nucleolar localization signal motif.

This sequence belongs to the peptidase M1 family. Zn(2+) serves as cofactor. As to expression, expressed in testis, heart, brain, lung, liver, skeletal muscle, kidney and ovary. Expressed in vascular tissues.

The protein resides in the nucleus. It is found in the nucleolus. It localises to the cytoplasm. Its function is as follows. Aminopeptidase which catalyzes the hydrolysis of amino acid residues from the N-terminus of peptide or protein substrates. This chain is Aminopeptidase O (Aopep), found in Mus musculus (Mouse).